We begin with the raw amino-acid sequence, 257 residues long: Ribosome maturation factor RimP (257 aa).

Positions 182-257 are disordered; it reads LRRGGPPAAD…SRLKDRDSLH (76 aa). The span at 191-205 shows a compositional bias: acidic residues; that stretch reads DEADEAEEAEDEEVA. Positions 224–236 are enriched in low complexity; sequence KASPAAKPQKQAR.

The protein belongs to the RimP family.

The protein resides in the cytoplasm. Required for maturation of 30S ribosomal subunits. The sequence is that of Ribosome maturation factor RimP from Methylobacterium radiotolerans (strain ATCC 27329 / DSM 1819 / JCM 2831 / NBRC 15690 / NCIMB 10815 / 0-1).